We begin with the raw amino-acid sequence, 777 residues long: Nuclear autoantigenic sperm protein (777 aa).

A2 is subject to N-acetylalanine. K34 is subject to N6-acetyllysine. One copy of the TPR 1 repeat lies at 44 to 77 (AKKLLGLGQKHLVMGDIPAAVNAFQEAASLLGKK). The segment at 117-128 (EEEEGEKTEEES) is histone-binding. Residue T124 is modified to Phosphothreonine. The residue at position 128 (S128) is a Phosphoserine. 3 stretches are compositionally biased toward basic and acidic residues: residues 152–186 (MGEKEAQKTEDKSLVKPEMDKEQETEMEKGGREDM), 227–259 (VTSKKPDQEIPGAEEGKSVSETDVQEECREKGG), and 267–276 (IEEKPKEASK). The segment at 152–496 (MGEKEAQKTE…ALENKSLQEN (345 aa)) is disordered. A histone-binding region spans residues 211-244 (EEGKGAAAPEGLSEAEVTSKKPDQEIPGAEEGKS). Residue K243 is modified to N6-acetyllysine. Phosphoserine is present on S244. Residue K285 is modified to N6-acetyllysine. Over residues 303-319 (DEPKEQVAASESERGKA) the composition is skewed to basic and acidic residues. S312 bears the Phosphoserine mark. Residues 342–353 (AADASAAEAGSE) are compositionally biased toward low complexity. Phosphoserine occurs at positions 399, 411, and 440. A histone-binding region spans residues 458-501 (EQMKEGEETEGSEEEDKENDKAEETLNDSALENKSLQENEEEEI). The segment covering 464–474 (EETEGSEEEDK) has biased composition (acidic residues). T466 carries the post-translational modification Phosphothreonine. S469, S486, and S492 each carry phosphoserine. A compositionally biased stretch (polar residues) spans 484–493 (NDSALENKSL). TPR repeat units lie at residues 531-564 (AQAHLKLGEVSVESENYLQAVEEFQACLNLQEQY) and 573-606 (AETHYQLGLAYGYNSQYDEAVAQFSKSIEVIEKR). Residues 593-648 (VAQFSKSIEVIEKRMAVLNEQMKEAEGSPTEYEKEIEELKELLPEIREKIEDAKES) are a coiled coil. Position 651 is a phosphoserine (S651). Over residues 667-681 (STSGFTPSGGSSSVS) the composition is skewed to low complexity. Residues 667-777 (STSGFTPSGG…AGATVESTAC (111 aa)) form a disordered region. T672 carries the post-translational modification Phosphothreonine. Phosphoserine is present on residues S694 and S695. The Nuclear localization signal motif lies at 705–711 (VRKKRKP). Residues 710 to 728 (KPEEESPRKDDAKKAKQEP) are compositionally biased toward basic and acidic residues. S715 carries the post-translational modification Phosphoserine. A Glycyl lysine isopeptide (Lys-Gly) (interchain with G-Cter in SUMO1) cross-link involves residue K725. Position 734 is a phosphoserine (S734).

Belongs to the NASP family. Binds to linker H1 histones. Interacts with histones H2A, H2B, H3 and H4. Interacts with histone H3.3. Interacts with histones H3 and H4; NASP is a histone chaperone that stabilizes and maintains a soluble pool of histone H3-H4 dimers. Interacts with ASF1A and ASF1B; the interaction is probably indirect and mediated by H3-H4. Also binds to HSP90 in the cytoplasm. This interaction stimulates binding of NASP to H1-6/H1T.

The protein localises to the cytoplasm. It is found in the nucleus. Its function is as follows. Component of the histone chaperone network. Binds and stabilizes histone H3-H4 not bound to chromatin to maintain a soluble reservoir and modulate degradation by chaperone-mediated autophagy. Required for DNA replication, normal cell cycle progression and cell proliferation. Forms a cytoplasmic complex with HSP90 and H1 linker histones and stimulates HSP90 ATPase activity. NASP and H1 histone are subsequently released from the complex and translocate to the nucleus where the histone is released for binding to DNA. This is Nuclear autoantigenic sperm protein from Bos taurus (Bovine).